We begin with the raw amino-acid sequence, 719 residues long: Putative ankyrin repeat protein RBE_0319 (719 aa).

ANK repeat units follow at residues 377–406, 408–438, 442–472, 476–506, 510–540, 544–572, 576–605, 609–639, and 642–672; these read VAEE…EISS, TLIK…NINE, NGGT…EVNK, YGFT…EINQ, YQTT…KFNE, LGYT…DINQ, DGYT…NVNE, HGLT…EVSE, and QYGT…NLNK.

The sequence is that of Putative ankyrin repeat protein RBE_0319 from Rickettsia bellii (strain RML369-C).